The sequence spans 309 residues: Homoserine kinase (309 aa).

91-101 (PIGSGLGSSAC) is a binding site for ATP.

The protein belongs to the GHMP kinase family. Homoserine kinase subfamily.

The protein resides in the cytoplasm. The enzyme catalyses L-homoserine + ATP = O-phospho-L-homoserine + ADP + H(+). It functions in the pathway amino-acid biosynthesis; L-threonine biosynthesis; L-threonine from L-aspartate: step 4/5. Catalyzes the ATP-dependent phosphorylation of L-homoserine to L-homoserine phosphate. The protein is Homoserine kinase of Citrobacter koseri (strain ATCC BAA-895 / CDC 4225-83 / SGSC4696).